Reading from the N-terminus, the 295-residue chain is Protoheme IX farnesyltransferase 2 (295 aa).

A run of 9 helical transmembrane segments spans residues 9-29 (ITKPGIIFGNVLSVAGGFFLA), 36-56 (LAVFLAAMIGTSLVVASGCVF), 80-100 (LISLKLALVYATVLGVAGVAL), 108-128 (LAALFAVIGFIIYVGFYSLYL), 135-155 (GTLVGSLSGAMPPVIGYVAVT), 163-183 (LTLLVMFSLWQMPHSYAIAIF), 209-229 (ILIYILAFLVATLMLTFSGYA), 230-250 (GMSYLAVAAAMGMYWLYMAWT), and 265-285 (FVFSIFTITALSVMMSLDFKV).

The protein belongs to the UbiA prenyltransferase family. Protoheme IX farnesyltransferase subfamily.

It localises to the cell inner membrane. The enzyme catalyses heme b + (2E,6E)-farnesyl diphosphate + H2O = Fe(II)-heme o + diphosphate. Its pathway is porphyrin-containing compound metabolism; heme O biosynthesis; heme O from protoheme: step 1/1. Its function is as follows. Converts heme B (protoheme IX) to heme O by substitution of the vinyl group on carbon 2 of heme B porphyrin ring with a hydroxyethyl farnesyl side group. The chain is Protoheme IX farnesyltransferase 2 from Pseudomonas fluorescens (strain Pf0-1).